Here is a 707-residue protein sequence, read N- to C-terminus: DCC-interacting protein 13-alpha (707 aa).

Residues methionine 1–glycine 428 form a required for RAB5A binding region. In terms of domain architecture, BAR spans glycine 3–proline 268. The stretch at glutamine 234 to alanine 257 forms a coiled coil. Positions leucine 277 to lysine 375 constitute a PH domain. 3 disordered regions span residues alanine 397–glutamate 433, glycine 466–serine 490, and glutamate 636–alanine 707. Position 399 is a phosphothreonine (threonine 399). Serine 401 is subject to Phosphoserine. The F&amp;H signature appears at serine 403 to glycine 414. Serine 410 is subject to Phosphoserine; by PKA. Residues serine 495–glutamine 655 enclose the PID domain. Positions leucine 620 to alanine 670 form a coiled coil. The segment covering glutamate 636–serine 666 has biased composition (basic and acidic residues). Low complexity predominate over residues glycine 679–serine 691. Phosphoserine occurs at positions 691 and 694. Positions glutamate 698 to alanine 707 are enriched in basic and acidic residues.

As to quaternary structure, homodimer. Binds RAB5A/Rab5 through an N-terminal domain. This interaction is essential for its recruitment to endosomal membranes as well as its role in cell proliferation. Binds DCC and the catalytic domain of the inactive form of AKT2 through its PID domain. Binds PIK3CA and subunits of the NuRD/MeCP1 complex. Interacts with OCRL and INPP5B. Interacts with NTRK2. Interacts with APPL2; interaction is independent of follicle stimulating hormone stimulation; interaction is decreased by adiponectin in a time-dependent manner. Forms a complex with APPL2 and RUVBL2. Forms a complex comprising APPL2, RUVBL2, CTNNB1, HDAC1 and HDAC2; interaction reduces interaction between CTNNB1, HDAC1, HDAC2 and RUVBL2 leading to the decrease of deacetylase activity of this complex; affects the recruitment of repressive complexes to the Wnt target genes. Interacts with ANXA2. Interacts with TGFBR1; interaction is TGF beta dependent; mediates trafficking of the TGFBR1 from the endosomes to the nucleus via microtubules in a TRAF6-dependent manner. Interacts with PRKCZ. Interacts with PIK3R1 and APPL2. Interacts with ADIPOR1; ADIPOQ enhances this interaction; inhibites adiponectin-stimulated binding of APPL2 to ADIPOR1. In terms of processing, phosphorylation at Ser-410 by PKA severely impairs binding to OCRL. In terms of tissue distribution, expressed in insulin-target tissues including skeletal muscle, liver, fat, and brain.

The protein localises to the early endosome membrane. The protein resides in the nucleus. Its subcellular location is the cytoplasm. It localises to the endosome. It is found in the cell projection. The protein localises to the ruffle. The protein resides in the cytoplasmic vesicle. Its subcellular location is the phagosome. In terms of biological role, multifunctional adapter protein that binds to various membrane receptors, nuclear factors and signaling proteins to regulate many processes, such as cell proliferation, immune response, endosomal trafficking and cell metabolism. Regulates signaling pathway leading to cell proliferation through interaction with RAB5A and subunits of the NuRD/MeCP1 complex. Functions as a positive regulator of innate immune response via activation of AKT1 signaling pathway by forming a complex with APPL1 and PIK3R1. Inhibits Fc-gamma receptor-mediated phagocytosis through PI3K/Akt signaling in macrophages. Regulates TLR4 signaling in activated macrophages. Involved in trafficking of the TGFBR1 from the endosomes to the nucleus via microtubules in a TRAF6-dependent manner. Plays a role in cell metabolism by regulating adiponecting and insulin signaling pathways. Required for fibroblast migration through HGF cell signaling. Positive regulator of beta-catenin/TCF-dependent transcription through direct interaction with RUVBL2/reptin resulting in the relief of RUVBL2-mediated repression of beta-catenin/TCF target genes by modulating the interactions within the beta-catenin-reptin-HDAC complex. This Mus musculus (Mouse) protein is DCC-interacting protein 13-alpha.